We begin with the raw amino-acid sequence, 488 residues long: uncharacterized protein (488 aa).

The next 12 membrane-spanning stretches (helical) occupy residues Phe-2–Val-22, Val-27–Ser-47, Phe-59–Val-79, Leu-106–Leu-126, Ile-176–Leu-196, Leu-241–Val-261, Ile-275–Tyr-295, Val-314–Leu-334, Ile-347–Phe-367, Ile-368–Ala-388, Val-438–Phe-458, and Asp-461–Ile-481.

This sequence belongs to the GntP permease family.

The protein localises to the cell inner membrane. This is an uncharacterized protein from Haemophilus influenzae (strain ATCC 51907 / DSM 11121 / KW20 / Rd).